We begin with the raw amino-acid sequence, 200 residues long: V-type proton ATPase subunit E (200 aa).

The protein belongs to the V-ATPase E subunit family.

Its function is as follows. Produces ATP from ADP in the presence of a proton gradient across the membrane. The protein is V-type proton ATPase subunit E of Thermoanaerobacter pseudethanolicus (strain ATCC 33223 / 39E) (Clostridium thermohydrosulfuricum).